The following is a 147-amino-acid chain: Ribonuclease P protein component 2 (147 aa).

The protein belongs to the eukaryotic/archaeal RNase P protein component 2 family. Consists of a catalytic RNA component and at least 4-5 protein subunits.

It localises to the cytoplasm. It catalyses the reaction Endonucleolytic cleavage of RNA, removing 5'-extranucleotides from tRNA precursor.. Part of ribonuclease P, a protein complex that generates mature tRNA molecules by cleaving their 5'-ends. This Methanocorpusculum labreanum (strain ATCC 43576 / DSM 4855 / Z) protein is Ribonuclease P protein component 2.